Consider the following 235-residue polypeptide: Ubiquinone/menaquinone biosynthesis C-methyltransferase UbiE (235 aa).

S-adenosyl-L-methionine-binding residues include Thr60 and Asp81.

This sequence belongs to the class I-like SAM-binding methyltransferase superfamily. MenG/UbiE family.

The enzyme catalyses a 2-demethylmenaquinol + S-adenosyl-L-methionine = a menaquinol + S-adenosyl-L-homocysteine + H(+). The catalysed reaction is a 2-methoxy-6-(all-trans-polyprenyl)benzene-1,4-diol + S-adenosyl-L-methionine = a 5-methoxy-2-methyl-3-(all-trans-polyprenyl)benzene-1,4-diol + S-adenosyl-L-homocysteine + H(+). It functions in the pathway quinol/quinone metabolism; menaquinone biosynthesis; menaquinol from 1,4-dihydroxy-2-naphthoate: step 2/2. The protein operates within cofactor biosynthesis; ubiquinone biosynthesis. Its function is as follows. Methyltransferase required for the conversion of demethylmenaquinol (DMKH2) to menaquinol (MKH2) and the conversion of 2-polyprenyl-6-methoxy-1,4-benzoquinol (DDMQH2) to 2-polyprenyl-3-methyl-6-methoxy-1,4-benzoquinol (DMQH2). This is Ubiquinone/menaquinone biosynthesis C-methyltransferase UbiE from Geotalea daltonii (strain DSM 22248 / JCM 15807 / FRC-32) (Geobacter daltonii).